The primary structure comprises 252 residues: MKTVTVKDLVIGTGAPKIIVSLMAKDIASVKSEALAYREADFDILEWRVDHYADLSNVDSVMAAAKILRKTMPEKPLLFTFRSAKEGGEQAISTEAYIALNRAAIDSGLVDMIDLELFTGDDQVKETVAYAHAHDVKVVMSNHDFHKTPEAEEIIARLRKMQSFDADIPKIALMPQSTSDVLTLLAATLEMQEQYADRPIITMSMAKTGVISRLAGEVFGSAATFGAVKKASAPGQISVNDLRTVLTILHQA.

3-dehydroquinate-binding positions include Ser21, 46–48 (EWR), and Arg82. His143 serves as the catalytic Proton donor/acceptor. Lys170 functions as the Schiff-base intermediate with substrate in the catalytic mechanism. 3-dehydroquinate is bound by residues Arg213, Ser232, and Gln236.

It belongs to the type-I 3-dehydroquinase family. Homodimer.

It carries out the reaction 3-dehydroquinate = 3-dehydroshikimate + H2O. It functions in the pathway metabolic intermediate biosynthesis; chorismate biosynthesis; chorismate from D-erythrose 4-phosphate and phosphoenolpyruvate: step 3/7. In terms of biological role, involved in the third step of the chorismate pathway, which leads to the biosynthesis of aromatic amino acids. Catalyzes the cis-dehydration of 3-dehydroquinate (DHQ) and introduces the first double bond of the aromatic ring to yield 3-dehydroshikimate. In Escherichia coli O17:K52:H18 (strain UMN026 / ExPEC), this protein is 3-dehydroquinate dehydratase.